Consider the following 72-residue polypeptide: DNA-directed RNA polymerase subunit omega (72 aa).

The protein belongs to the RNA polymerase subunit omega family. The RNAP catalytic core consists of 2 alpha, 1 beta, 1 beta' and 1 omega subunit. When a sigma factor is associated with the core the holoenzyme is formed, which can initiate transcription.

The enzyme catalyses RNA(n) + a ribonucleoside 5'-triphosphate = RNA(n+1) + diphosphate. In terms of biological role, promotes RNA polymerase assembly. Latches the N- and C-terminal regions of the beta' subunit thereby facilitating its interaction with the beta and alpha subunits. The chain is DNA-directed RNA polymerase subunit omega from Limosilactobacillus reuteri (strain DSM 20016) (Lactobacillus reuteri).